The primary structure comprises 330 residues: Glycerol-3-phosphate dehydrogenase [NAD(P)+] (330 aa).

The NADPH site is built by Ser11, Phe12, Arg32, and Lys106. 3 residues coordinate sn-glycerol 3-phosphate: Lys106, Gly133, and Ser135. Ala137 lines the NADPH pocket. Residues Lys188, Asp241, Ser251, Arg252, and Asn253 each coordinate sn-glycerol 3-phosphate. Residue Lys188 is the Proton acceptor of the active site. Arg252 is a binding site for NADPH. The NADPH site is built by Val276 and Glu278.

It belongs to the NAD-dependent glycerol-3-phosphate dehydrogenase family.

Its subcellular location is the cytoplasm. The enzyme catalyses sn-glycerol 3-phosphate + NAD(+) = dihydroxyacetone phosphate + NADH + H(+). It carries out the reaction sn-glycerol 3-phosphate + NADP(+) = dihydroxyacetone phosphate + NADPH + H(+). The protein operates within membrane lipid metabolism; glycerophospholipid metabolism. In terms of biological role, catalyzes the reduction of the glycolytic intermediate dihydroxyacetone phosphate (DHAP) to sn-glycerol 3-phosphate (G3P), the key precursor for phospholipid synthesis. This chain is Glycerol-3-phosphate dehydrogenase [NAD(P)+], found in Clostridium botulinum (strain Eklund 17B / Type B).